The chain runs to 72 residues: Probable movement protein p8 (72 aa).

The interval 16–58 is disordered; sequence GRARSVEGKKHNGSGLTGVKRHAVSETSQKSQQGTGNGTMTNI. Positions 40-58 are enriched in polar residues; it reads SETSQKSQQGTGNGTMTNI.

This sequence belongs to the carmovirus/necrovirus/panicovirus movement protein p8 family.

Functionally, cell-to-cell movement. The protein is Probable movement protein p8 of Tobacco necrosis virus (strain A) (TNV-A).